The following is an 817-amino-acid chain: Protein EFR3 homolog B (817 aa).

3 positions are modified to phosphoserine: S212, S214, and S216.

The protein belongs to the EFR3 family. As to quaternary structure, component of a phosphatidylinositol 4-kinase (PI4K) complex, composed of PI4KA, EFR3 (EFR3A or EFR3B), TTC7 (TTC7A or TTC7B) and HYCC (HYCC1 or HYCC2). Palmitoylated at its N-terminus, anchoring the protein to the plasma membrane. In terms of tissue distribution, widely expressed.

It is found in the cell membrane. The protein localises to the cytoplasm. Its subcellular location is the cytosol. In terms of biological role, component of a complex required to localize phosphatidylinositol 4-kinase (PI4K) to the plasma membrane. The complex acts as a regulator of phosphatidylinositol 4-phosphate (PtdIns(4)P) synthesis. In the complex, EFR3B probably acts as the membrane-anchoring component. Also involved in responsiveness to G-protein-coupled receptors; it is however unclear whether this role is direct or indirect. The chain is Protein EFR3 homolog B (Efr3b) from Mus musculus (Mouse).